Reading from the N-terminus, the 364-residue chain is Probable protein phosphatase methylesterase 1 (364 aa).

Positions 1–53 (MSDDKLDTLPDLQSETSHVTTPHRQNDLLRQAVTHGRPPPVPSTSTSGKKREM) are disordered. Positions 11–23 (DLQSETSHVTTPH) are enriched in polar residues. Catalysis depends on residues Ser164, Asp190, and His316.

It belongs to the AB hydrolase superfamily.

The catalysed reaction is [phosphatase 2A protein]-C-terminal L-leucine methyl ester + H2O = [phosphatase 2A protein]-C-terminal L-leucine + methanol + H(+). Its function is as follows. Demethylates proteins that have been reversibly carboxymethylated. The sequence is that of Probable protein phosphatase methylesterase 1 from Caenorhabditis elegans.